The sequence spans 292 residues: NAD kinase (292 aa).

The active-site Proton acceptor is the aspartate 73. NAD(+) is bound by residues 73–74 (DG), 147–148 (NE), histidine 158, arginine 175, aspartate 177, 188–193 (TAYSLS), and glutamine 247.

Belongs to the NAD kinase family. It depends on a divalent metal cation as a cofactor.

The protein resides in the cytoplasm. It carries out the reaction NAD(+) + ATP = ADP + NADP(+) + H(+). Functionally, involved in the regulation of the intracellular balance of NAD and NADP, and is a key enzyme in the biosynthesis of NADP. Catalyzes specifically the phosphorylation on 2'-hydroxyl of the adenosine moiety of NAD to yield NADP. The polypeptide is NAD kinase (Edwardsiella ictaluri (strain 93-146)).